A 496-amino-acid polypeptide reads, in one-letter code: Pituitary adenylate cyclase-activating polypeptide type I receptor (496 aa).

The N-terminal stretch at 1–20 (MARTLQLSLTALLLLPMAIA) is a signal peptide. Over 21–152 (MHSDCIFKKE…SGDQDYYYLS (132 aa)) the chain is Extracellular. 3 disulfides stabilise this stretch: C34–C63, C54–C118, and C77–C134. Residues N48, N60, and N117 are each glycosylated (N-linked (GlcNAc...) asparagine). An important for ADCYAP1/PACAP ligand binding and specificity region spans residues 125–139 (EPFPHYFDACGFDDY). The important for ligand binding and specificity stretch occupies residues 125 to 139 (EPFPHYFDACGFDDY). A helical transmembrane segment spans residues 153–177 (VKALYTVGYSTSLVTLTTAMVILCR). At 178 to 187 (FRKLHCTRNF) the chain is on the cytoplasmic side. A helical membrane pass occupies residues 188-208 (IHMNLFVSFMLRAISVFIKDW). Residues 209–223 (ILYAEQDSSHCFVST) are Extracellular-facing. Residues 224-249 (VECKAVMVFFHYCVVSNYFWLFIEGL) traverse the membrane as a helical segment. Cysteines 226 and 296 form a disulfide. The Cytoplasmic portion of the chain corresponds to 250 to 267 (YLFTLLVETFFPERRYFY). The helical transmembrane segment at 268–290 (WYTIIGWGTPTVCVTVWAVLRLY) threads the bilayer. Over 291 to 302 (FDDAGCWDMNDS) the chain is Extracellular. The helical transmembrane segment at 303–329 (TALWWVIKGPVVGSIMVNFVLFIGIII) threads the bilayer. Residues 330–347 (ILVQKLQSPDMGGNESSI) lie on the Cytoplasmic side of the membrane. A helical membrane pass occupies residues 348–402 (YFSCVQKCYCKPQRAQQHSCKMSELSTITLRLARSTLLLIPLFGIHYTVFAFSPE). Residues 403–407 (NVSKR) lie on the Extracellular side of the membrane. Residues 408-431 (ERLVFELGLGSFQGFVVAVLYCFL) form a helical membrane-spanning segment. Residues 432–496 (NGEVQAEIKR…SSLPADNLAT (65 aa)) are Cytoplasmic-facing. Residues S462 and S475 each carry the phosphoserine modification.

This sequence belongs to the G-protein coupled receptor 2 family. Interacts with maxadilan, a vasodilator peptide from Lutzomyia longipalpis saliva; the interaction results in ADCYAP1R1 activation.

The protein resides in the cell membrane. Its function is as follows. G protein-coupled receptor activated by the neuropeptide pituitary adenylate cyclase-activating polypeptide (ADCYAP1/PACAP). Binds both PACAP27 and PACAP38 bioactive peptides. Ligand binding causes a conformation change that triggers signaling via guanine nucleotide-binding proteins (G proteins) and modulates the activity of downstream effectors. Activates cAMP-dependent pathway. May regulate the release of adrenocorticotropin, luteinizing hormone, growth hormone, prolactin, epinephrine, and catecholamine. May play a role in spermatogenesis and sperm motility. Causes smooth muscle relaxation and secretion in the gastrointestinal tract. In Mus musculus (Mouse), this protein is Pituitary adenylate cyclase-activating polypeptide type I receptor.